The chain runs to 453 residues: Tubulin delta chain (453 aa).

143–149 contacts GTP; that stretch reads AGGTGSG.

The protein belongs to the tubulin family. Found in a complex with TEDC1, TEDC2, TUBE1 and TUBD1.

The protein localises to the nucleus. Its subcellular location is the cytoplasm. The protein resides in the cytoskeleton. It localises to the microtubule organizing center. It is found in the centrosome. The protein localises to the centriole. Its subcellular location is the cell projection. The protein resides in the cilium. Functionally, acts as a positive regulator of hedgehog signaling and regulates ciliary function. The chain is Tubulin delta chain (TUBD1) from Macaca fascicularis (Crab-eating macaque).